The sequence spans 292 residues: ATP synthase gamma chain (292 aa).

The protein belongs to the ATPase gamma chain family. In terms of assembly, F-type ATPases have 2 components, CF(1) - the catalytic core - and CF(0) - the membrane proton channel. CF(1) has five subunits: alpha(3), beta(3), gamma(1), delta(1), epsilon(1). CF(0) has three main subunits: a, b and c.

Its subcellular location is the cell inner membrane. Functionally, produces ATP from ADP in the presence of a proton gradient across the membrane. The gamma chain is believed to be important in regulating ATPase activity and the flow of protons through the CF(0) complex. This chain is ATP synthase gamma chain, found in Methylobacterium sp. (strain 4-46).